The primary structure comprises 822 residues: MTKLSGQELHAELSRRAFLSYTAAVGALGLCGTSLLAQGARAEGLANGEVMSGCHWGVFKARVENGRAVAFEPWDKDPAPSHQLPGVLDSIYSPTRIKYPMVRREFLEKGVNADRSTRGNGDFVRVTWDEALDLVARELKRVQESYGPTGTFGGSYGWKSPGRLHNCQVLMRRALNLAGGFVNSSGDYSTAAAQIIMPHVMGTLEVYEQQTAWPVVVENTDLMVFWAADPMKTNEIGWVIPDHGAYAGMKALKEKGTRVICINPVRTETADYFGADVVSPRPQTDVALMLGMAHTLYSEDLHDKDFLENCTTGFDLFAAYLTGESDGTPKTAEWAAEICGLPAEQIRELARSFVAGRTMLAAGWSIQRMHHGEQAHWMLVTLASMIGQIGLPGGGFGLSYHYSNGGSPTSDGPALGGISDGGKAVEGAAWLSESGATSIPCARVVDMLLNPGGEFQFNGATATYPDVKLAYWAGGNPFAHHQDRNRMLKAWEKLETFIVQDFQWTATARHADIVLPATTSYERNDIESVGDYSNRAILAMKKVVDPLYEARSDYDIFAALAERLGKGAEFTEGRDEMGWISSFYEAAVKQAEFKNVAMPSFEDFWSEGIVEFPITEGANFVRYADFREDPLFNPLGTPSGLIEIYSKNIEKMGYDDCPAHPTWMEPAERLGGAGAKYPLHVVASHPKSRLHSQLNGTSLRDLYAVAGHEPCLINPADAAARGIADGDVLRVFNDRGQILVGAKVSDAVMPGAIQIYEGGWYDPLDPSEEGTLDKYGDVNVLSLDVGTSKLAQGNCGQTILADVEKYAGAPVTVTVFDTPKGA.

The segment at residues 1–42 (MTKLSGQELHAELSRRAFLSYTAAVGALGLCGTSLLAQGARA) is a signal peptide (tat-type signal). Mo-bis(molybdopterin guanine dinucleotide)-binding positions include W158, 158–160 (WKS), S189, 232–233 (KT), 262–263 (IN), 283–285 (QTD), 364–365 (WS), R368, N476, H480, 500–501 (QD), R523, D553, 683–686 (ASHP), R689, 691–693 (HSQ), N779, and 796–797 (GQ).

The protein belongs to the prokaryotic molybdopterin-containing oxidoreductase family. As to quaternary structure, homodimer. Mo-bis(molybdopterin guanine dinucleotide) serves as cofactor. In terms of processing, predicted to be exported by the Tat system. The position of the signal peptide cleavage has been experimentally proven.

Its subcellular location is the periplasm. It catalyses the reaction dimethyl sulfide + a menaquinone + H2O = dimethyl sulfoxide + a menaquinol. The catalysed reaction is trimethylamine + 2 Fe(III)-[cytochrome c] + H2O = trimethylamine N-oxide + 2 Fe(II)-[cytochrome c] + 3 H(+). In terms of biological role, catalyzes the reduction of dimethyl sulfoxide (DMSO) and trimethylamine N-oxide (TMAO) to dimethyl sulfide (DMS) and trimethylamine, respectively. The terminal DMSO reductase can also use various sulfoxides and N-oxide compounds as terminal electron acceptor in addition to DMSO and TMAO. The sequence is that of Dimethyl sulfoxide/trimethylamine N-oxide reductase (dmsA) from Cereibacter sphaeroides (Rhodobacter sphaeroides).